Reading from the N-terminus, the 155-residue chain is UPF0260 protein NGR_c07710 (155 aa).

This sequence belongs to the UPF0260 family.

This Sinorhizobium fredii (strain NBRC 101917 / NGR234) protein is UPF0260 protein NGR_c07710.